Reading from the N-terminus, the 27-residue chain is Toxin TdII-4 (27 aa).

Positions 1–27 (KDGYLMEPNGCKLGCLTRPAKYCWXEE) constitute an LCN-type CS-alpha/beta domain.

Belongs to the long (4 C-C) scorpion toxin superfamily. Sodium channel inhibitor family. Beta subfamily. Expressed by the venom gland.

The protein resides in the secreted. Functionally, beta toxins bind voltage-independently at site-4 of sodium channels (Nav) and shift the voltage of activation toward more negative potentials thereby affecting sodium channel activation and promoting spontaneous and repetitive firing. This toxin is active against mammals and also affects neuromuscular preparations of frog. The chain is Toxin TdII-4 from Tityus discrepans (Venezuelan scorpion).